Reading from the N-terminus, the 285-residue chain is Orotidine 5'-phosphate decarboxylase (285 aa).

Residues D40, 62 to 64 (KTH), 93 to 102 (DRKFVDIGST), Y235, and R253 contribute to the substrate site. The active-site Proton donor is K95.

Belongs to the OMP decarboxylase family.

The enzyme catalyses orotidine 5'-phosphate + H(+) = UMP + CO2. Its pathway is pyrimidine metabolism; UMP biosynthesis via de novo pathway; UMP from orotate: step 2/2. This Paracoccidioides brasiliensis protein is Orotidine 5'-phosphate decarboxylase (URA3).